Reading from the N-terminus, the 490-residue chain is Katanin p60 ATPase-containing subunit A-like 1 (490 aa).

Position 1 is an N-acetylmethionine (Met1). A disordered region spans residues 95 to 184 (DPAVWPPPVP…DGEMPKFDGA (90 aa)). Residues 116–127 (PNREVRPLRKEM) are compositionally biased toward basic and acidic residues. The span at 128-139 (AGVGARGPVGRA) shows a compositional bias: low complexity. Over residues 143–169 (SKSEKPSTSRDKDYRARGRDDKGRKNM) the composition is skewed to basic and acidic residues. Ser174 is modified (phosphoserine). 248–255 (GPPGTGKT) lines the ATP pocket.

It belongs to the AAA ATPase family. Katanin p60 subunit A1 subfamily. A-like 1 sub-subfamily. As to quaternary structure, interacts with KATNB1 and KATNBL1. In terms of tissue distribution, expressed in testis, restricted to Sertoli cells (at protein level).

It localises to the cytoplasm. Its subcellular location is the cytoskeleton. The protein resides in the spindle pole. The protein localises to the spindle. It catalyses the reaction n ATP + n H2O + a microtubule = n ADP + n phosphate + (n+1) alpha/beta tubulin heterodimers.. In terms of biological role, regulates microtubule dynamics in Sertoli cells, a process that is essential for spermiogenesis and male fertility. Severs microtubules in an ATP-dependent manner, promoting rapid reorganization of cellular microtubule arrays. Has microtubule-severing activity in vitro. The polypeptide is Katanin p60 ATPase-containing subunit A-like 1 (Homo sapiens (Human)).